A 416-amino-acid polypeptide reads, in one-letter code: Antigen EG13 (416 aa).

The F-BAR domain maps to 1–247; it reads MIQERADIEK…TVAKVDADAD (247 aa). The disordered stretch occupies residues 297–327; that stretch reads LKTFTSPDRGGPIPGTTDSGSNISTSPVHTT. Over residues 312 to 327 the composition is skewed to polar residues; sequence TTDSGSNISTSPVHTT. An SH3 domain is found at 361–416; the sequence is RPGVPIRALYDYVGVEADELSFNSGDLFEKLEDEDEQGWCKGRKDGRVGLYPRQLR.

This Echinococcus granulosus (Hydatid tapeworm) protein is Antigen EG13 (EG13).